A 392-amino-acid chain; its full sequence is Cell division protein DivIB (392 aa).

The tract at residues 1–88 (MSEKDNNLTP…TQSSEAPIEN (88 aa)) is disordered. The Cytoplasmic segment spans residues 1–131 (MSEKDNNLTP…KGSAPLLKKM (131 aa)). Residues 14–32 (KHLEYQKRKAEEAKKEKKA) show a composition bias toward basic and acidic residues. Over residues 58–76 (TRDEAESAELLEEGFETNN) the composition is skewed to acidic residues. Residues 132-152 (WPALAVVVLVFVGSLYLISPL) form a helical membrane-spanning segment. In terms of domain architecture, POTRA spans 153–224 (SKISTFSVSG…NRFEAIVKEH (72 aa)). Residues 153 to 392 (SKISTFSVSG…TAQSTTTSSN (240 aa)) are Extracellular-facing. The segment at 368-392 (ISAQNAKKTDASSENTAQSTTTSSN) is disordered.

It belongs to the FtsQ/DivIB family. DivIB subfamily.

It localises to the cell membrane. Cell division protein that may be involved in stabilizing or promoting the assembly of the division complex. The protein is Cell division protein DivIB of Lactococcus lactis subsp. lactis (strain KF147).